The following is a 466-amino-acid chain: Soluble pyridine nucleotide transhydrogenase (466 aa).

Residue 36–45 (ERYHNVGGGC) coordinates FAD.

The protein belongs to the class-I pyridine nucleotide-disulfide oxidoreductase family. The cofactor is FAD.

It localises to the cytoplasm. It catalyses the reaction NAD(+) + NADPH = NADH + NADP(+). Conversion of NADPH, generated by peripheral catabolic pathways, to NADH, which can enter the respiratory chain for energy generation. This chain is Soluble pyridine nucleotide transhydrogenase, found in Enterobacter sp. (strain 638).